Here is a 343-residue protein sequence, read N- to C-terminus: Dihydroorotate dehydrogenase (quinone) (343 aa).

Residues 58–62 (AGYDK) and S82 contribute to the FMN site. K62 is a substrate binding site. 107–111 (NRMGF) contributes to the substrate binding site. FMN contacts are provided by N136 and N167. N167 lines the substrate pocket. S170 functions as the Nucleophile in the catalytic mechanism. Position 172 (N172) interacts with substrate. K206 and S234 together coordinate FMN. Position 235-236 (235-236 (NT)) interacts with substrate. FMN contacts are provided by residues G256, G285, and 306–307 (YS).

Belongs to the dihydroorotate dehydrogenase family. Type 2 subfamily. In terms of assembly, monomer. Requires FMN as cofactor.

It localises to the cell membrane. The enzyme catalyses (S)-dihydroorotate + a quinone = orotate + a quinol. The protein operates within pyrimidine metabolism; UMP biosynthesis via de novo pathway; orotate from (S)-dihydroorotate (quinone route): step 1/1. Catalyzes the conversion of dihydroorotate to orotate with quinone as electron acceptor. The sequence is that of Dihydroorotate dehydrogenase (quinone) from Erythrobacter litoralis (strain HTCC2594).